A 216-amino-acid polypeptide reads, in one-letter code: Cyclic AMP receptor protein (216 aa).

6–126 lines the a nucleoside 3',5'-cyclic phosphate pocket; the sequence is LFHGLAPEEV…HNLAALLARR (121 aa). Residues 75–78 and 85–86 contribute to the 3',5'-cyclic AMP site; these read GEMS and RS. Residues 140–206 enclose the HTH crp-type domain; it reads EEARNRVAYA…PGTVEVREAA (67 aa). Positions 166 to 185 form a DNA-binding region, H-T-H motif; that stretch reads HHELAALAGTSRETVSRVLH.

As to quaternary structure, homodimer.

Activates transcription. Positively regulates six promoters upstream of the TTHB186, TTHB147, TTHB178, TTHB159, TTHA0771 and TTHA0176 genes in a cAMP-dependent manner. Regulated genes include clustered regularly interspaced short palindromic repeat (CRISPR) associated (Cas) genes, and the genes encoding a putative transcriptional regulator, a protein containing the exonuclease III-like domain of DNA polymerase, a GCN5-related acetyltransferase homolog, and some T.thermophilus-specific proteins of unknown function. The consensus DNA-binding site of this transcriptional regulator is 5'-(CT)NNG(G/T)(G/T)C(A/C)N(A/T)NNTCACAN(G/C)(G/C)-3' in which N is G, A, T or C. This is Cyclic AMP receptor protein from Thermus thermophilus (strain ATCC 27634 / DSM 579 / HB8).